Here is a 100-residue protein sequence, read N- to C-terminus: Small ribosomal subunit protein uS14c (100 aa).

It belongs to the universal ribosomal protein uS14 family. In terms of assembly, part of the 30S ribosomal subunit.

The protein localises to the plastid. In terms of biological role, binds 16S rRNA, required for the assembly of 30S particles. The chain is Small ribosomal subunit protein uS14c from Cuscuta obtusiflora (Peruvian dodder).